The chain runs to 140 residues: Nucleoside diphosphate kinase (140 aa).

6 residues coordinate ATP: K11, F59, R87, T93, R104, and N114. The Pros-phosphohistidine intermediate role is filled by H117.

It belongs to the NDK family. In terms of assembly, homotetramer. Requires Mg(2+) as cofactor.

It is found in the cytoplasm. The catalysed reaction is a 2'-deoxyribonucleoside 5'-diphosphate + ATP = a 2'-deoxyribonucleoside 5'-triphosphate + ADP. It catalyses the reaction a ribonucleoside 5'-diphosphate + ATP = a ribonucleoside 5'-triphosphate + ADP. In terms of biological role, major role in the synthesis of nucleoside triphosphates other than ATP. The ATP gamma phosphate is transferred to the NDP beta phosphate via a ping-pong mechanism, using a phosphorylated active-site intermediate. The protein is Nucleoside diphosphate kinase of Rhizobium etli (strain ATCC 51251 / DSM 11541 / JCM 21823 / NBRC 15573 / CFN 42).